Here is a 379-residue protein sequence, read N- to C-terminus: Cytochrome b (379 aa).

Helical transmembrane passes span 33-53 (FGSL…FLAM), 77-98 (WLIR…FIHV), 113-133 (WNIG…GYVL), and 178-198 (FFAF…VHLL). Residues H83 and H97 each coordinate heme b. Residues H182 and H196 each coordinate heme b. H201 is an a ubiquinone binding site. 4 helical membrane-spanning segments follow: residues 226–246 (IKDL…ALFF), 288–308 (LGGV…PLLN), 320–340 (ITQT…WIGG), and 347–367 (FTTI…ILMP).

This sequence belongs to the cytochrome b family. In terms of assembly, the cytochrome bc1 complex contains 11 subunits: 3 respiratory subunits (MT-CYB, CYC1 and UQCRFS1), 2 core proteins (UQCRC1 and UQCRC2) and 6 low-molecular weight proteins (UQCRH/QCR6, UQCRB/QCR7, UQCRQ/QCR8, UQCR10/QCR9, UQCR11/QCR10 and a cleavage product of UQCRFS1). This cytochrome bc1 complex then forms a dimer. Heme b is required as a cofactor.

It is found in the mitochondrion inner membrane. Component of the ubiquinol-cytochrome c reductase complex (complex III or cytochrome b-c1 complex) that is part of the mitochondrial respiratory chain. The b-c1 complex mediates electron transfer from ubiquinol to cytochrome c. Contributes to the generation of a proton gradient across the mitochondrial membrane that is then used for ATP synthesis. The protein is Cytochrome b (MT-CYB) of Akodon affinis (Colombian grass mouse).